Here is a 363-residue protein sequence, read N- to C-terminus: tRNA (guanine(26)-N(2))-dimethyltransferase (363 aa).

The 348-residue stretch at 5–352 (VLRREGGVKF…GEYGEVLMAF (348 aa)) folds into the Trm1 methyltransferase domain. Positions 40, 67, 85, 111, and 112 each coordinate S-adenosyl-L-methionine.

Belongs to the class I-like SAM-binding methyltransferase superfamily. Trm1 family.

The enzyme catalyses guanosine(26) in tRNA + 2 S-adenosyl-L-methionine = N(2)-dimethylguanosine(26) in tRNA + 2 S-adenosyl-L-homocysteine + 2 H(+). Dimethylates a single guanine residue at position 26 of a number of tRNAs using S-adenosyl-L-methionine as donor of the methyl groups. This Pyrobaculum aerophilum (strain ATCC 51768 / DSM 7523 / JCM 9630 / CIP 104966 / NBRC 100827 / IM2) protein is tRNA (guanine(26)-N(2))-dimethyltransferase.